A 124-amino-acid chain; its full sequence is Large ribosomal subunit protein bL17 (124 aa).

Belongs to the bacterial ribosomal protein bL17 family. In terms of assembly, part of the 50S ribosomal subunit. Contacts protein L32.

This Acidithiobacillus ferrooxidans (strain ATCC 23270 / DSM 14882 / CIP 104768 / NCIMB 8455) (Ferrobacillus ferrooxidans (strain ATCC 23270)) protein is Large ribosomal subunit protein bL17.